The chain runs to 78 residues: UPF0369 protein RF_1112 (78 aa).

Belongs to the SDHAF4 family.

The protein is UPF0369 protein RF_1112 of Rickettsia felis (strain ATCC VR-1525 / URRWXCal2) (Rickettsia azadi).